Reading from the N-terminus, the 1118-residue chain is Cytospin-A (1118 aa).

Disordered regions lie at residues 1–157 (MKKS…DGQI) and 198–221 (GGKE…PHVS). Composition is skewed to polar residues over residues 57–102 (NPTS…TKET) and 112–123 (SRASANKKQSAA). Residues 144-153 (SESRMSKSKS) are compositionally biased toward basic and acidic residues. Positions 204–215 (EGPEEEEEEEEE) are enriched in acidic residues. Positions 225–264 (AADVESTLILLQEQNQAIREELNLLKSENRMLKDRLNALG) form a coiled coil. Residues 289–379 (AGSGQSDGGG…RRGSSGNASE (91 aa)) are disordered. Residues 343 to 363 (SSDDALDAPSGASSSSESECA) are compositionally biased toward low complexity. Coiled coils occupy residues 384–438 (CLTE…MDSL) and 475–796 (GRYM…RGRV). Disordered stretches follow at residues 771-790 (QEKN…RKQD), 837-876 (FDSA…PPAA), and 920-1001 (SAAS…ERKD). Residues 838-855 (DSASQGPPSNGASVTPTV) are compositionally biased toward polar residues. Over residues 861-872 (PRTPLSPSPMKT) the composition is skewed to pro residues. A compositionally biased stretch (polar residues) spans 930-945 (QRVSNMDSTKTISVSR). Residues 946-956 (RSSEEMKRDMS) are compositionally biased toward basic and acidic residues. Residues 961 to 986 (ASSTSLMAMSAASAPLSLSSSSPTAS) show a composition bias toward low complexity. One can recognise a Calponin-homology (CH) domain in the interval 1012–1117 (GSKRNALLKW…YVTAIYKYFE (106 aa)).

Belongs to the cytospin-A family. As to quaternary structure, may interact with both microtubules and actin cytoskeleton.

Its subcellular location is the cytoplasm. It is found in the cytoskeleton. The protein localises to the spindle. The protein resides in the cell junction. It localises to the gap junction. In terms of biological role, involved in cytokinesis and spindle organization. May play a role in actin cytoskeleton organization and microtubule stabilization and hence required for proper cell adhesion and migration. The protein is Cytospin-A (specc1l) of Takifugu rubripes (Japanese pufferfish).